The sequence spans 349 residues: GMP reductase (349 aa).

An NADP(+)-binding site is contributed by 108 to 131 (LDFFKIKKIFSLSSELKYICIDVA). Residues Gly181 and Gly183 each contribute to the K(+) site. Residue Cys186 is the Thioimidate intermediate of the active site. An NADP(+)-binding site is contributed by 216–239 (IISDGGCTVSGDIAKAFGGGADFV).

It belongs to the IMPDH/GMPR family. GuaC type 1 subfamily. Homotetramer.

It catalyses the reaction IMP + NH4(+) + NADP(+) = GMP + NADPH + 2 H(+). In terms of biological role, catalyzes the irreversible NADPH-dependent deamination of GMP to IMP. It functions in the conversion of nucleobase, nucleoside and nucleotide derivatives of G to A nucleotides, and in maintaining the intracellular balance of A and G nucleotides. The sequence is that of GMP reductase from Buchnera aphidicola subsp. Schizaphis graminum (strain Sg).